Here is a 354-residue protein sequence, read N- to C-terminus: Holliday junction branch migration complex subunit RuvB (354 aa).

A large ATPase domain (RuvB-L) region spans residues 4–191 (TDKLAAPARV…FGIVARLEFY (188 aa)). ATP is bound by residues leucine 30, arginine 31, glycine 72, lysine 75, threonine 76, threonine 77, 138-140 (EDY), arginine 181, tyrosine 191, and arginine 228. Mg(2+) is bound at residue threonine 76. Residues 192–262 (TAEELARIVT…MADAALAMLD (71 aa)) are small ATPAse domain (RuvB-S). The head domain (RuvB-H) stretch occupies residues 265–354 (RVGFDLMDRK…GDAGELFGDA (90 aa)). 3 residues coordinate DNA: arginine 301, arginine 320, and arginine 325.

This sequence belongs to the RuvB family. As to quaternary structure, homohexamer. Forms an RuvA(8)-RuvB(12)-Holliday junction (HJ) complex. HJ DNA is sandwiched between 2 RuvA tetramers; dsDNA enters through RuvA and exits via RuvB. An RuvB hexamer assembles on each DNA strand where it exits the tetramer. Each RuvB hexamer is contacted by two RuvA subunits (via domain III) on 2 adjacent RuvB subunits; this complex drives branch migration. In the full resolvosome a probable DNA-RuvA(4)-RuvB(12)-RuvC(2) complex forms which resolves the HJ.

The protein resides in the cytoplasm. It catalyses the reaction ATP + H2O = ADP + phosphate + H(+). Functionally, the RuvA-RuvB-RuvC complex processes Holliday junction (HJ) DNA during genetic recombination and DNA repair, while the RuvA-RuvB complex plays an important role in the rescue of blocked DNA replication forks via replication fork reversal (RFR). RuvA specifically binds to HJ cruciform DNA, conferring on it an open structure. The RuvB hexamer acts as an ATP-dependent pump, pulling dsDNA into and through the RuvAB complex. RuvB forms 2 homohexamers on either side of HJ DNA bound by 1 or 2 RuvA tetramers; 4 subunits per hexamer contact DNA at a time. Coordinated motions by a converter formed by DNA-disengaged RuvB subunits stimulates ATP hydrolysis and nucleotide exchange. Immobilization of the converter enables RuvB to convert the ATP-contained energy into a lever motion, pulling 2 nucleotides of DNA out of the RuvA tetramer per ATP hydrolyzed, thus driving DNA branch migration. The RuvB motors rotate together with the DNA substrate, which together with the progressing nucleotide cycle form the mechanistic basis for DNA recombination by continuous HJ branch migration. Branch migration allows RuvC to scan DNA until it finds its consensus sequence, where it cleaves and resolves cruciform DNA. This Cupriavidus taiwanensis (strain DSM 17343 / BCRC 17206 / CCUG 44338 / CIP 107171 / LMG 19424 / R1) (Ralstonia taiwanensis (strain LMG 19424)) protein is Holliday junction branch migration complex subunit RuvB.